A 131-amino-acid chain; its full sequence is Profilin-1 (131 aa).

Cys13 and Cys115 are joined by a disulfide. The Involved in PIP2 interaction signature appears at 81–97; that stretch reads RVIRGKKGAGGITIKKT. Thr111 carries the post-translational modification Phosphothreonine.

It belongs to the profilin family. As to quaternary structure, occurs in many kinds of cells as a complex with monomeric actin in a 1:1 ratio.

Its subcellular location is the cytoplasm. The protein localises to the cytoskeleton. Functionally, binds to actin and affects the structure of the cytoskeleton. At high concentrations, profilin prevents the polymerization of actin, whereas it enhances it at low concentrations. By binding to PIP2, it inhibits the formation of IP3 and DG. The chain is Profilin-1 (PRO1) from Phleum pratense (Common timothy).